The sequence spans 476 residues: Serine--tRNA ligase (476 aa).

Residue 280-282 participates in L-serine binding; it reads TAE. 311–313 serves as a coordination point for ATP; that stretch reads RAE. Glu334 contacts L-serine. 401 to 404 serves as a coordination point for ATP; sequence EISS. Position 436 (Ser436) interacts with L-serine.

The protein belongs to the class-II aminoacyl-tRNA synthetase family. Type-1 seryl-tRNA synthetase subfamily. Homodimer. The tRNA molecule binds across the dimer.

Its subcellular location is the cytoplasm. It carries out the reaction tRNA(Ser) + L-serine + ATP = L-seryl-tRNA(Ser) + AMP + diphosphate + H(+). It catalyses the reaction tRNA(Sec) + L-serine + ATP = L-seryl-tRNA(Sec) + AMP + diphosphate + H(+). The protein operates within aminoacyl-tRNA biosynthesis; selenocysteinyl-tRNA(Sec) biosynthesis; L-seryl-tRNA(Sec) from L-serine and tRNA(Sec): step 1/1. Catalyzes the attachment of serine to tRNA(Ser). Is also able to aminoacylate tRNA(Sec) with serine, to form the misacylated tRNA L-seryl-tRNA(Sec), which will be further converted into selenocysteinyl-tRNA(Sec). The chain is Serine--tRNA ligase from Rhodopseudomonas palustris (strain HaA2).